The primary structure comprises 251 residues: L-ascorbate peroxidase 2, cytosolic (251 aa).

The Proton acceptor role is filled by His43. Position 163 (His163) interacts with heme b. K(+) contacts are provided by Thr164, Thr180, Asn182, Ile185, and Asp187.

It belongs to the peroxidase family. Ascorbate peroxidase subfamily. The cofactor is heme b. In terms of tissue distribution, detected in bundle sheath cells, the photosynthetic cells that surround the phloem and xylem.

Its subcellular location is the cytoplasm. The enzyme catalyses L-ascorbate + H2O2 = L-dehydroascorbate + 2 H2O. Its function is as follows. Plays a key role in hydrogen peroxide removal. This Arabidopsis thaliana (Mouse-ear cress) protein is L-ascorbate peroxidase 2, cytosolic.